A 61-amino-acid chain; its full sequence is Small ribosomal subunit protein uS14 (61 aa).

Residues C24, C27, C40, and C43 each contribute to the Zn(2+) site.

It belongs to the universal ribosomal protein uS14 family. Zinc-binding uS14 subfamily. As to quaternary structure, part of the 30S ribosomal subunit. Contacts proteins S3 and S10. Zn(2+) is required as a cofactor.

Binds 16S rRNA, required for the assembly of 30S particles and may also be responsible for determining the conformation of the 16S rRNA at the A site. This Alkaliphilus metalliredigens (strain QYMF) protein is Small ribosomal subunit protein uS14.